Consider the following 212-residue polypeptide: Cytidylate kinase (212 aa).

7–15 (GPAASGKGT) contacts ATP.

This sequence belongs to the cytidylate kinase family. Type 1 subfamily.

The protein resides in the cytoplasm. The catalysed reaction is CMP + ATP = CDP + ADP. The enzyme catalyses dCMP + ATP = dCDP + ADP. In Rhodopseudomonas palustris (strain ATCC BAA-98 / CGA009), this protein is Cytidylate kinase.